Reading from the N-terminus, the 120-residue chain is Large ribosomal subunit protein bL17 (120 aa).

Belongs to the bacterial ribosomal protein bL17 family. As to quaternary structure, part of the 50S ribosomal subunit. Contacts protein L32.

The chain is Large ribosomal subunit protein bL17 from Mycoplasmopsis pulmonis (strain UAB CTIP) (Mycoplasma pulmonis).